The primary structure comprises 525 residues: Ribosomal protein S6 kinase beta-1 (525 aa).

Residues 28–32 carry the TOS motif motif; that stretch reads FDIDL. Residues 32–46 are compositionally biased toward acidic residues; the sequence is LDQPEDAGSEDELEE. Residues 32–54 are disordered; sequence LDQPEDAGSEDELEEGGQLNESM. In terms of domain architecture, Protein kinase spans 91 to 352; it reads FELLRVLGKG…AGEVQAHPFF (262 aa). ATP is bound by residues 97–105 and Lys-123; that span reads LGKGGYGKV. Asp-218 serves as the catalytic Proton acceptor. Thr-252 is modified (phosphothreonine; by PDPK1). The AGC-kinase C-terminal domain maps to 353 to 423; sequence RHINWEELLA…VAPSVLESVK (71 aa). A disordered region spans residues 380 to 399; the sequence is SQFDSKFTRQTPVDSPDDST. Residues 381–399 show a composition bias toward polar residues; the sequence is QFDSKFTRQTPVDSPDDST. Ser-394 carries the post-translational modification Phosphoserine. Thr-412 carries the phosphothreonine; by MTOR, NEK6 and NEK7 modification. Residues 424–525 are autoinhibitory domain; that stretch reads EKFSFEPKIR…KRPEHLRMNL (102 aa). 2 positions are modified to phosphoserine: Ser-434 and Ser-441. A Phosphothreonine modification is found at Thr-444. Ser-447 and Ser-452 each carry phosphoserine. Position 516 is an N6-acetyllysine (Lys-516).

The protein belongs to the protein kinase superfamily. AGC Ser/Thr protein kinase family. S6 kinase subfamily. As to quaternary structure, interacts with PPP1R9A/neurabin-1. Interacts with RPTOR. Interacts with IRS1. Interacts with EIF3B and EIF3C. Interacts with TRAF4. Interacts with POLDIP3. Interacts (via N-terminus) with IER5. Post-translationally, phosphorylation at Thr-412 is regulated by mTORC1. The phosphorylation at this site is maintained by an agonist-dependent autophosphorylation mechanism. Activated by phosphorylation at Thr-252 by PDPK1. Dephosphorylation by PPP1CC at Thr-412 in mitochondrion.

The protein resides in the cytoplasm. It is found in the synapse. The protein localises to the synaptosome. It localises to the mitochondrion outer membrane. Its subcellular location is the mitochondrion. The enzyme catalyses L-seryl-[protein] + ATP = O-phospho-L-seryl-[protein] + ADP + H(+). The catalysed reaction is L-threonyl-[protein] + ATP = O-phospho-L-threonyl-[protein] + ADP + H(+). With respect to regulation, activation requires multiple phosphorylation events on serine/threonine residues. Activation appears to be first mediated by phosphorylation of multiple sites in the autoinhibitory domain, which facilitates phosphorylation at Thr-412, disrupting the autoinhibitory mechanism and allowing phosphorylation of Thr-252 by PDPK1. The active conformation of the kinase is believed to be stabilized by a mechanism involving three conserved phosphorylation sites located in the kinase domain activation loop (Thr-252) and in the AGC-kinase C-terminal domain (Ser-394 in the middle of the tail/linker region and Thr-412 within a hydrophobic motif at its end). Activated by mTORC1; isoform Alpha I and isoform Alpha II are sensitive to rapamycin, which inhibits activating phosphorylation at Thr-412. Activated by PDPK1. In terms of biological role, serine/threonine-protein kinase that acts downstream of mTOR signaling in response to growth factors and nutrients to promote cell proliferation, cell growth and cell cycle progression. Regulates protein synthesis through phosphorylation of EIF4B, RPS6 and EEF2K, and contributes to cell survival by repressing the pro-apoptotic function of BAD. Under conditions of nutrient depletion, the inactive form associates with the EIF3 translation initiation complex. Upon mitogenic stimulation, phosphorylation by the mechanistic target of rapamycin complex 1 (mTORC1) leads to dissociation from the EIF3 complex and activation. The active form then phosphorylates and activates several substrates in the pre-initiation complex, including the EIF2B complex and the cap-binding complex component EIF4B. Also controls translation initiation by phosphorylating a negative regulator of EIF4A, PDCD4, targeting it for ubiquitination and subsequent proteolysis. Promotes initiation of the pioneer round of protein synthesis by phosphorylating POLDIP3/SKAR. In response to IGF1, activates translation elongation by phosphorylating EEF2 kinase (EEF2K), which leads to its inhibition and thus activation of EEF2. Also plays a role in feedback regulation of mTORC2 by mTORC1 by phosphorylating MAPKAP1/SIN1, MTOR and RICTOR, resulting in the inhibition of mTORC2 and AKT1 signaling. Also involved in feedback regulation of mTORC1 and mTORC2 by phosphorylating DEPTOR. Mediates cell survival by phosphorylating the pro-apoptotic protein BAD and suppressing its pro-apoptotic function. Phosphorylates mitochondrial URI1 leading to dissociation of a URI1-PPP1CC complex. The free mitochondrial PPP1CC can then dephosphorylate RPS6KB1 at Thr-412, which is proposed to be a negative feedback mechanism for the RPS6KB1 anti-apoptotic function. Mediates TNF-alpha-induced insulin resistance by phosphorylating IRS1 at multiple serine residues, resulting in accelerated degradation of IRS1. In cells lacking functional TSC1-2 complex, constitutively phosphorylates and inhibits GSK3B. May be involved in cytoskeletal rearrangement through binding to neurabin. Phosphorylates and activates the pyrimidine biosynthesis enzyme CAD, downstream of MTOR. Following activation by mTORC1, phosphorylates EPRS and thereby plays a key role in fatty acid uptake by adipocytes and also most probably in interferon-gamma-induced translation inhibition. In Mus musculus (Mouse), this protein is Ribosomal protein S6 kinase beta-1 (Rps6kb1).